A 209-amino-acid chain; its full sequence is tRNA (guanine-N(7)-)-methyltransferase (209 aa).

Aspartate 35, glutamate 60, asparagine 87, and aspartate 113 together coordinate S-adenosyl-L-methionine. Aspartate 113 is an active-site residue. Lysine 117 and aspartate 149 together coordinate substrate.

Belongs to the class I-like SAM-binding methyltransferase superfamily. TrmB family.

The catalysed reaction is guanosine(46) in tRNA + S-adenosyl-L-methionine = N(7)-methylguanosine(46) in tRNA + S-adenosyl-L-homocysteine. It participates in tRNA modification; N(7)-methylguanine-tRNA biosynthesis. In terms of biological role, catalyzes the formation of N(7)-methylguanine at position 46 (m7G46) in tRNA. The sequence is that of tRNA (guanine-N(7)-)-methyltransferase from Prochlorococcus marinus (strain MIT 9515).